The sequence spans 194 residues: Imidazoleglycerol-phosphate dehydratase (194 aa).

The protein belongs to the imidazoleglycerol-phosphate dehydratase family.

It is found in the cytoplasm. It catalyses the reaction D-erythro-1-(imidazol-4-yl)glycerol 3-phosphate = 3-(imidazol-4-yl)-2-oxopropyl phosphate + H2O. Its pathway is amino-acid biosynthesis; L-histidine biosynthesis; L-histidine from 5-phospho-alpha-D-ribose 1-diphosphate: step 6/9. The protein is Imidazoleglycerol-phosphate dehydratase of Listeria innocua serovar 6a (strain ATCC BAA-680 / CLIP 11262).